Consider the following 493-residue polypeptide: Adenylyltransferase and sulfurtransferase uba4 (493 aa).

Residues Gly-99, Asp-120, 127–131, Lys-144, and 188–189 contribute to the ATP site; these read SNLHR and DN. The Zn(2+) site is built by Cys-237 and Cys-240. Cys-254 functions as the Glycyl thioester intermediate; for adenylyltransferase activity in the catalytic mechanism. 2 residues coordinate Zn(2+): Cys-316 and Cys-319. The 116-residue stretch at 376–491 folds into the Rhodanese domain; sequence INKEPTIIDV…WREQIDPDWP (116 aa). The active-site Cysteine persulfide intermediate; for sulfurtransferase activity is Cys-446.

This sequence in the N-terminal section; belongs to the HesA/MoeB/ThiF family. UBA4 subfamily. Zn(2+) serves as cofactor.

It is found in the cytoplasm. The protein resides in the cytosol. The enzyme catalyses [molybdopterin-synthase sulfur-carrier protein]-C-terminal Gly-Gly + ATP + H(+) = [molybdopterin-synthase sulfur-carrier protein]-C-terminal Gly-Gly-AMP + diphosphate. It carries out the reaction [molybdopterin-synthase sulfur-carrier protein]-C-terminal Gly-Gly-AMP + S-sulfanyl-L-cysteinyl-[cysteine desulfurase] + AH2 = [molybdopterin-synthase sulfur-carrier protein]-C-terminal-Gly-aminoethanethioate + L-cysteinyl-[cysteine desulfurase] + A + AMP + 2 H(+). It participates in tRNA modification; 5-methoxycarbonylmethyl-2-thiouridine-tRNA biosynthesis. The protein operates within cofactor biosynthesis; molybdopterin biosynthesis. Plays a central role in 2-thiolation of mcm(5)S(2)U at tRNA wobble positions of cytosolic tRNA(Lys), tRNA(Glu) and tRNA(Gln). Also essential during biosynthesis of the molybdenum cofactor. Acts by mediating the C-terminal thiocarboxylation of sulfur carriers urm1 and mocs2a. Its N-terminus first activates urm1 and mocs2a as acyl-adenylates (-COAMP), then the persulfide sulfur on the catalytic cysteine is transferred to urm1 and mocs2a to form thiocarboxylation (-COSH) of their C-terminus. The reaction probably involves hydrogen sulfide that is generated from the persulfide intermediate and that acts as a nucleophile towards urm1 and mocs2a. Subsequently, a transient disulfide bond is formed. Does not use thiosulfate as sulfur donor; nfs1 probably acting as a sulfur donor for thiocarboxylation reactions. This is Adenylyltransferase and sulfurtransferase uba4 from Aspergillus fumigatus (strain ATCC MYA-4609 / CBS 101355 / FGSC A1100 / Af293) (Neosartorya fumigata).